The sequence spans 252 residues: Low-density lipoprotein receptor-related protein 5-like protein (252 aa).

LDL-receptor class B repeat units lie at residues 3–45 (GHVY…NWVA), 46–88 (RSLY…HPEM), 89–132 (GLTY…DLQE), 133–175 (GKLY…LGDF), and 176–218 (IYWT…DKVV). Residues 223 to 247 (HADRNGGAATCASSRPTQPGLAAPS) form a disordered region.

In Homo sapiens (Human), this protein is Low-density lipoprotein receptor-related protein 5-like protein (LRP5L).